The sequence spans 201 residues: Protein GrpE (201 aa).

Residues 1–11 are compositionally biased toward polar residues; that stretch reads MTDSTNNQGTS. Residues 1-40 are disordered; sequence MTDSTNNQGTSGRPDDDHTTEEVASVFNDPGAQAPAGEPD.

Belongs to the GrpE family. As to quaternary structure, homodimer.

It is found in the cytoplasm. Participates actively in the response to hyperosmotic and heat shock by preventing the aggregation of stress-denatured proteins, in association with DnaK and GrpE. It is the nucleotide exchange factor for DnaK and may function as a thermosensor. Unfolded proteins bind initially to DnaJ; upon interaction with the DnaJ-bound protein, DnaK hydrolyzes its bound ATP, resulting in the formation of a stable complex. GrpE releases ADP from DnaK; ATP binding to DnaK triggers the release of the substrate protein, thus completing the reaction cycle. Several rounds of ATP-dependent interactions between DnaJ, DnaK and GrpE are required for fully efficient folding. The chain is Protein GrpE from Beijerinckia indica subsp. indica (strain ATCC 9039 / DSM 1715 / NCIMB 8712).